A 523-amino-acid chain; its full sequence is Acetyl-coenzyme A carboxylase carboxyl transferase subunit beta, chloroplastic (523 aa).

The 300-residue stretch at 224–523 folds into the CoA carboxyltransferase N-terminal domain; the sequence is FWVICENCHK…FVPSNQNSIK (300 aa). Zn(2+) contacts are provided by cysteine 228, cysteine 231, cysteine 247, and cysteine 250. The C4-type zinc finger occupies 228-250; that stretch reads CENCHKFNYKRLFKSKMNICEEC.

This sequence belongs to the AccD/PCCB family. As to quaternary structure, acetyl-CoA carboxylase is a heterohexamer composed of biotin carboxyl carrier protein, biotin carboxylase and 2 subunits each of ACCase subunit alpha and ACCase plastid-coded subunit beta (accD). It depends on Zn(2+) as a cofactor.

The protein localises to the plastid. It localises to the chloroplast stroma. The catalysed reaction is N(6)-carboxybiotinyl-L-lysyl-[protein] + acetyl-CoA = N(6)-biotinyl-L-lysyl-[protein] + malonyl-CoA. The protein operates within lipid metabolism; malonyl-CoA biosynthesis; malonyl-CoA from acetyl-CoA: step 1/1. Component of the acetyl coenzyme A carboxylase (ACC) complex. Biotin carboxylase (BC) catalyzes the carboxylation of biotin on its carrier protein (BCCP) and then the CO(2) group is transferred by the transcarboxylase to acetyl-CoA to form malonyl-CoA. In Cucumis sativus (Cucumber), this protein is Acetyl-coenzyme A carboxylase carboxyl transferase subunit beta, chloroplastic.